Here is a 2752-residue protein sequence, read N- to C-terminus: Piezo-type mechanosensitive ion channel component 2 (2752 aa).

Topologically, residues 1–12 are cytoplasmic; sequence MASEVVCGLIFR. Residues 13 to 24 traverse the membrane as a helical segment; it reads LLLPICLAVACA. The Extracellular segment spans residues 25–30; that stretch reads FRYNGL. Residues 31-43 form a helical membrane-spanning segment; sequence SFVYLIYLLLIPL. The Cytoplasmic portion of the chain corresponds to 44–50; sequence FSEPTKT. Residues 51–76 form a helical membrane-spanning segment; that stretch reads TMQGHTGRLLKSLCFISLSFLLLHII. At 77 to 122 the chain is on the extracellular side; sequence FHITLVSLEAQHRIAPGYNCSTWEKTFRQIGFESLKGADAGNGIRV. N-linked (GlcNAc...) asparagine glycosylation occurs at Asn-95. The chain crosses the membrane as a helical span at residues 123–141; the sequence is FVPDIGMFIASLTIWLLCR. Residues 142–221 are Cytoplasmic-facing; that stretch reads NIVQKPVTDE…KEFIGNMITT (80 aa). The chain crosses the membrane as a helical span at residues 222–237; it reads AGKVVVTILLGSSGMM. Residues 238 to 240 lie on the Extracellular side of the membrane; that stretch reads LPS. The chain crosses the membrane as a helical span at residues 241-258; it reads LTSSVYFFVFLGLCTWWS. Residues 259–264 are Cytoplasmic-facing; sequence WCRTFD. Residues 265–287 form a helical membrane-spanning segment; the sequence is PLLFSCLCVLLAIFTAGHLIGLY. Over 288-335 the chain is Extracellular; it reads LYQFQFFQEAVPPNDYYARLFGIKSVIQTDCSSTWKIIVNPDLSWYHH. Residues 336-355 traverse the membrane as a helical segment; the sequence is ANPILLLVMYYTLATLIRIW. Topologically, residues 356 to 492 are cytoplasmic; that stretch reads LQEPLVQDEG…SIKVHAMVSV (137 aa). A disordered region spans residues 446–478; that stretch reads STPQYRWEPSDESSEKREEEEEEKEEFEEERSR. Acidic residues predominate over residues 463-474; sequence EEEEEEKEEFEE. A helical membrane pass occupies residues 493-514; it reads FQFIMKQSYICALIAMMAWSIT. At 515 to 519 the chain is on the extracellular side; the sequence is YHSWL. The chain crosses the membrane as a helical span at residues 520-531; the sequence is TFVLLIWSCTLW. Topologically, residues 532–535 are cytoplasmic; sequence MIRN. A helical transmembrane segment spans residues 536–562; that stretch reads RRKYAMISSPFMVVYGNLLLILQYIWS. Topologically, residues 563-583 are extracellular; it reads FELPEIKKVPGFLEKKEPGEL. A helical transmembrane segment spans residues 584 to 614; it reads ASKILFTITFWLLLRQHLTEQKALQEKEALL. At 615–685 the chain is on the cytoplasmic side; it reads SEVKIGSQEN…GNLVVAMFIK (71 aa). Positions 623–632 are enriched in acidic residues; the sequence is ENEEKDEELQ. The interval 623–664 is disordered; sequence ENEEKDEELQDIQVEGEPKEEEEEEAKEEKQERKKVEQEEAE. A compositionally biased stretch (basic and acidic residues) spans 649–660; the sequence is KEEKQERKKVEQ. The chain crosses the membrane as a helical span at residues 686-699; the sequence is YWIYVCGGMFFFVS. Topologically, residues 700–705 are extracellular; it reads FEGKIV. A helical membrane pass occupies residues 706-724; it reads MYKIIYMVLFLFCVALYQV. Residues 725–733 are Cytoplasmic-facing; sequence HYEWWRKIL. A helical membrane pass occupies residues 734–753; sequence KYFWMSVVIYTMLVLIFIYT. Over 754-785 the chain is Extracellular; that stretch reads YQFENFPGLWQNMTGLKKEKLEDLGLKQFTVA. Residues 786-807 form a helical membrane-spanning segment; sequence ELFTRIFIPTSFLLVCILHLHY. Residues 808–940 lie on the Cytoplasmic side of the membrane; the sequence is FHDRFLELTD…QVFMWWILEL (133 aa). Position 838 is a phosphoserine (Ser-838). Residues 862 to 883 show a composition bias toward basic and acidic residues; that stretch reads PGEEKLEGYSEKAQKGDLGKDS. The disordered stretch occupies residues 862–902; the sequence is PGEEKLEGYSEKAQKGDLGKDSEESEEDGEEEEESEEEEET. A compositionally biased stretch (acidic residues) spans 884–902; that stretch reads EESEEDGEEEEESEEEEET. The helical transmembrane segment at 941–956 threads the bilayer; that stretch reads HIIKIVSSYIIWVSVK. At 957 to 962 the chain is on the extracellular side; it reads EVSLFN. Residues 963–972 form a helical membrane-spanning segment; that stretch reads YVFLISWAFA. Residues 973–980 lie on the Cytoplasmic side of the membrane; that stretch reads LPYAKLRR. The helical transmembrane segment at 981–1001 threads the bilayer; it reads LASSVCTVWTCVIIVCKMLYQ. The Extracellular portion of the chain corresponds to 1002–1057; sequence LQTIKPENFSVNCSLPNENQTNIPFNELNKSLLYSAPIDPTEWVGLRKSSPLLVYL. The N-linked (GlcNAc...) asparagine glycan is linked to Asn-1013. Cys-1014 and Cys-1192 are disulfide-bonded. Residues 1058–1082 traverse the membrane as a helical segment; it reads RNNLLMLAILAFEVTIYRHQEYYRG. Residues 1083–1123 lie on the Cytoplasmic side of the membrane; the sequence is RNNLTAPVSRTIFHDITRLHLDDGLINCAKYFINYFFYKFG. A helical transmembrane segment spans residues 1124–1138; it reads LETCFLMSVNVIGQR. At 1139–1140 the chain is on the extracellular side; the sequence is MD. The helical transmembrane segment at 1141–1154 threads the bilayer; that stretch reads FYAMIHACWLIAVL. At 1155 to 1165 the chain is on the cytoplasmic side; that stretch reads YRRRRKAIAEI. Residues 1166-1185 form a helical membrane-spanning segment; the sequence is WPKYCCFLACIITFQYFICI. Over 1186–1222 the chain is Extracellular; it reads GIPPAPCRDYPWRFKGASFNDNIIKWLYFPDFIVRPN. The chain crosses the membrane as a helical span at residues 1223-1243; that stretch reads PVFLVYDFMLLLCASLQRQIF. Topologically, residues 1244 to 1297 are cytoplasmic; the sequence is EDENKAAVRIMAGDNVEICMNLDAASFSQHNPVPDFIHCRSYLDMSKVIIFSYL. A helical transmembrane segment spans residues 1298–1310; sequence FWFVLTIIFITGT. The Extracellular segment spans residues 1311 to 1316; that stretch reads TRISIF. The helical transmembrane segment at 1317-1329 threads the bilayer; that stretch reads CMGYLVACFYFLL. The Cytoplasmic portion of the chain corresponds to 1330–1338; that stretch reads FGGDLLLKP. Residues 1339 to 1364 form a helical membrane-spanning segment; the sequence is IKSILRYWDWLIAYNVFVITMKNILS. At 1365 to 1413 the chain is on the extracellular side; it reads IGACGYIGTLVHNSCWLIQAFSLACTVKGYQMPAANSPCTLPSGEAGII. Residues 1414 to 1430 traverse the membrane as a helical segment; the sequence is WDSICFAFLLLQRRVFM. At 1431 to 1921 the chain is on the cytoplasmic side; that stretch reads SYYFLHVVAD…YAMYNTLVAR (491 aa). A coiled-coil region spans residues 1458–1529; the sequence is TIVKAVKARI…EREADKQKAK (72 aa). Disordered regions lie at residues 1488 to 1534, 1593 to 1636, and 1844 to 1868; these read QQKY…KKKQ, ALRQ…KKSD, and SQDD…KLGS. Residues 1594–1615 are compositionally biased toward basic residues; the sequence is LRQRHKEKKRSAREERKRRRKG. Residues 1922-1936 form a helical membrane-spanning segment; it reads SEMVCYFVIILNHMV. Over 1937–1943 the chain is Extracellular; the sequence is SASMITL. The helical transmembrane segment at 1944–1955 threads the bilayer; it reads LLPILIFLWAML. Residues 1956–1961 are Cytoplasmic-facing; that stretch reads SVPRPS. A helical transmembrane segment spans residues 1962-1983; it reads RRFWMMAIVYTEVAIVVKYFFQ. Topologically, residues 1984–2016 are extracellular; that stretch reads FGFFPWNKNVEVNKDKPYHPPNIIGVEKKEGYV. The chain crosses the membrane as a helical span at residues 2017 to 2035; sequence LYDLIQLLALFFHRSILKC. At 2036–2189 the chain is on the cytoplasmic side; the sequence is HGLWDEDDMT…HPEYSAVTDV (154 aa). 2 disordered regions span residues 2047–2069 and 2090–2135; these read SGMA…DSSD and QQTA…SVLS. Over residues 2100–2127 the composition is skewed to low complexity; that stretch reads GSSSEPSQRSSFSSNRSQRGSTSTRNSS. The helical transmembrane segment at 2190-2209 threads the bilayer; that stretch reads YVLMFLADTVDFIIIVFGFW. Residues 2210–2231 are Extracellular-facing; the sequence is AFGKHSAAADITSSLSEDQVPG. A helical transmembrane segment spans residues 2232 to 2252; it reads PFLVMVLIQFGTMVVDRALYL. Over 2253–2256 the chain is Cytoplasmic; sequence RKTV. The chain crosses the membrane as a helical span at residues 2257–2280; that stretch reads LGKVIFQVILVFGIHFWMFFILPG. Residues 2281-2289 are Extracellular-facing; it reads VTERKFSQN. The helical transmembrane segment at 2290–2312 threads the bilayer; that stretch reads LVAQLWYFVKCVYFGLSAYQIRC. The Cytoplasmic portion of the chain corresponds to 2313 to 2397; it reads GYPTRVLGNF…YPQPRGQKKK (85 aa). A helical membrane pass occupies residues 2398–2421; it reads KVVKYGMGGMIIVLLICIVWFPLL. Residues 2422–2669 are Extracellular-facing; it reads FMSLIKSVAG…PSLGFLAGYG (248 aa). The helical transmembrane segment at 2670-2690 threads the bilayer; that stretch reads IMGLYASVVLVIGKFVREFFS. The Cytoplasmic portion of the chain corresponds to 2691–2752; sequence GISHSIMFEE…MIKWTREKTN (62 aa).

Belongs to the PIEZO (TC 1.A.75) family. As to quaternary structure, homotrimer; the homotrimer forms a propeller-shaped Piezo channel with a cation-ion conducting pore. Heterotrimeric interaction may occur between PIEZO1 and PIEZO2. Interacts with STOML3. Interacts with TMC7; the interaction inhibits PIEZO2-conducted mechanically activated currents. Interacts with TMC1; the interaction may be part of the MET complex. Interacts with MDFIC (via C-terminus); the interaction prolongs Piezo channel inactivation. Interacts with MDFI (via C-terminus); the interaction prolongs Piezo channel inactivation.

The protein resides in the cell membrane. The enzyme catalyses Ca(2+)(in) = Ca(2+)(out). Regulated by auxillary subunits MDFIC and MDFI. Channel activity is inhibited by TMEM120A. Phosphatidic acid and lysophosphatidic acid inhibit PIEZO2 channel activity. Pore-forming subunit of the mechanosensitive non-specific cation Piezo channel required for rapidly adapting mechanically activated (MA) currents and has a key role in sensing touch and tactile pain. Piezo channels are homotrimeric three-blade propeller-shaped structures that utilize a cap-motion and plug-and-latch mechanism to gate their ion-conducting pathways. Expressed in sensory neurons, is essential for diverse physiological processes, including respiratory control, systemic metabolism, urinary function, and proprioception. Mediates airway stretch sensing, enabling efficient respiration at birth and maintaining normal breathing in adults. It regulates brown and beige adipose tissue morphology and function, preventing systemic hypermetabolism. In the lower urinary tract, acts as a sensor in both the bladder urothelium and innervating sensory neurons being required for bladder-stretch sensing and urethral micturition reflexes, ensuring proper urinary function. Additionally, PIEZO2 serves as the principal mechanotransducer in proprioceptors, facilitating proprioception and coordinated body movements. In inner ear hair cells, PIEZO1/2 subunits may constitute part of the mechanotransducer (MET) non-selective cation channel complex where they may act as pore-forming ion-conducting component in the complex. Required for Merkel-cell mechanotransduction. Plays a major role in light-touch mechanosensation. This chain is Piezo-type mechanosensitive ion channel component 2, found in Homo sapiens (Human).